The sequence spans 270 residues: Secreted RxLR effector protein 149 (270 aa).

The first 21 residues, M1–A21, serve as a signal peptide directing secretion. The RxLR-dEER signature appears at R43–R58.

This sequence belongs to the RxLR effector family.

The protein localises to the secreted. It localises to the host nucleus. Its subcellular location is the host cytoplasm. In terms of biological role, secreted effector that completely suppresses the host cell death induced by cell death-inducing proteins. This Plasmopara viticola (Downy mildew of grapevine) protein is Secreted RxLR effector protein 149.